A 788-amino-acid polypeptide reads, in one-letter code: Endonuclease MutS2 (788 aa).

332-339 is an ATP binding site; sequence GPNTGGKT. A Smr domain is found at 713-788; it reads VDLRGMDAEE…GTGVTVVEIK (76 aa).

It belongs to the DNA mismatch repair MutS family. MutS2 subfamily. As to quaternary structure, homodimer. Binds to stalled ribosomes, contacting rRNA.

In terms of biological role, endonuclease that is involved in the suppression of homologous recombination and thus may have a key role in the control of bacterial genetic diversity. Acts as a ribosome collision sensor, splitting the ribosome into its 2 subunits. Detects stalled/collided 70S ribosomes which it binds and splits by an ATP-hydrolysis driven conformational change. Acts upstream of the ribosome quality control system (RQC), a ribosome-associated complex that mediates the extraction of incompletely synthesized nascent chains from stalled ribosomes and their subsequent degradation. Probably generates substrates for RQC. In Clostridium botulinum (strain Loch Maree / Type A3), this protein is Endonuclease MutS2.